The primary structure comprises 432 residues: MSLHYQTGFGNACATEALPGALPAGRNSPQICPYGLYAEQLSGTAFTAPRAENRRSWLYRIRPGVQHLPFAPFAGAQRWLSDFGRQPVTPNQLRWSPLPMPDAPTDFIDGMHTWGGNGGPEEQSGVGIHLYAANRSMQGRFFYNADGEMLIVPQQGRLRLATELGLIDIEPYEIAVVPRGVRLRVELLDDVARGYVLENFGTAMRLPELGPIGSNCLANARDFQIPVAWYEDVEGDFELIAKFTGGFWRAPITHSPLNVVAWHGTHAPYKYDLRNFNTVGSISYDHPDPSIFTVLTSPSDTPGTANMDFAIFPPRILAMENTFRPPWFHRNIASEFMGLIHGVYDAKAEGFAPGGASLHNCMSGHGPDADTFEKASHADTSQAHYIRDTMAFMFETRRVIRPTAQALASPQRQDDYYQCWQGLQKHFDPEQA.

Residue His-286 is the Proton acceptor of the active site. Fe cation is bound by residues His-329 and Glu-335. Homogentisate contacts are provided by Tyr-344 and His-365. His-365 contacts Fe cation.

This sequence belongs to the homogentisate dioxygenase family. As to quaternary structure, hexamer; dimer of trimers. Fe cation is required as a cofactor.

The enzyme catalyses homogentisate + O2 = 4-maleylacetoacetate + H(+). The protein operates within amino-acid degradation; L-phenylalanine degradation; acetoacetate and fumarate from L-phenylalanine: step 4/6. In terms of biological role, involved in the catabolism of homogentisate (2,5-dihydroxyphenylacetate or 2,5-OH-PhAc), a central intermediate in the degradation of phenylalanine and tyrosine. Catalyzes the oxidative ring cleavage of the aromatic ring of homogentisate to yield maleylacetoacetate. The sequence is that of Homogentisate 1,2-dioxygenase from Bordetella pertussis (strain Tohama I / ATCC BAA-589 / NCTC 13251).